Consider the following 185-residue polypeptide: Elongation factor P (185 aa).

It belongs to the elongation factor P family.

It localises to the cytoplasm. It participates in protein biosynthesis; polypeptide chain elongation. Involved in peptide bond synthesis. Stimulates efficient translation and peptide-bond synthesis on native or reconstituted 70S ribosomes in vitro. Probably functions indirectly by altering the affinity of the ribosome for aminoacyl-tRNA, thus increasing their reactivity as acceptors for peptidyl transferase. The polypeptide is Elongation factor P (Moorella thermoacetica (strain ATCC 39073 / JCM 9320)).